The primary structure comprises 369 residues: Glycine oxidase (369 aa).

Residues isoleucine 14–isoleucine 15, glutamate 34–serine 35, alanine 42–threonine 43, alanine 47–methionine 49, and valine 174 each bind FAD. The substrate site is built by arginine 302 and arginine 329. Histidine 327–leucine 333 is an FAD binding site.

Belongs to the DAO family. ThiO subfamily. In terms of assembly, homotetramer. The cofactor is FAD.

The catalysed reaction is glycine + O2 + H2O = glyoxylate + H2O2 + NH4(+). It carries out the reaction glyphosate + O2 + H2O = aminomethylphosphonate + glyoxylate + H2O2 + H(+). It catalyses the reaction N-ethylglycine + O2 + H2O = ethylamine + glyoxylate + H2O2. The enzyme catalyses sarcosine + O2 + H2O = methylamine + glyoxylate + H2O2. The catalysed reaction is D-alanine + O2 + H2O = pyruvate + H2O2 + NH4(+). It participates in cofactor biosynthesis; thiamine diphosphate biosynthesis. Functionally, catalyzes the FAD-dependent oxidative deamination of glycine, leading to glyoxylate, ammonia and hydrogen peroxide. Is also able to act on various amines and D-amino acids to yield the corresponding alpha-keto acids, ammonia/amine, and hydrogen peroxide. Can also oxidize the herbicide glyphosate (N-phosphonomethylglycine), and thus may be involved in the degradation pathway that allows B.licheniformis J33-8 to grow with glyphosate as the sole source of carbon. Is essential for thiamine biosynthesis since the oxidation of glycine catalyzed by ThiO generates the glycine imine intermediate (dehydroglycine) required for the biosynthesis of the thiazole ring of thiamine pyrophosphate. The chain is Glycine oxidase from Bacillus licheniformis.